The chain runs to 573 residues: MLRLPTVFRQMRPVSRVLAPHLTRAYAKDVKFGADARALMLQGVDLLADAVAVTMGPKGRTVIIEQSWGSPKVTKDGVTVAKSIDLKDKYKNIGAKLVQDVANNTNEEAGDGTTTATVLARSIAKEGFEKISKGANPVEIRRGVMLAVDAVIAELKKQSKPVTTPEEIAQVATISANGDKEIGNIISDAMKKVGRKGVITVKDGKTLNDELEIIEGMKFDRGYISPYFINTSKGQKCEFQDAYVLLSEKKISSIQSIVPALEIANAHRKPLVIIAEDVDGEALSTLVLNRLKVGLQVVAVKAPGFGDNRKNQLKDMAIATGGAVFGEEGLTLNLEDVQPHDLGKVGEVIVTKDDAMLLKGKGDKAQIEKRIQEIIEQLDVTTSEYEKEKLNERLAKLSDGVAVLKVGGTSDVEVNEKKDRVTDALNATRAAVEEGIVLGGGCALLRCIPALDSLTPANEDQKIGIEIIKRTLKIPAMTIAKNAGVEGSLIVEKIMQSSSEVGYDAMAGDFVNMVEKGIIDPTKVVRTALLDAAGVASLLTTAEVVVTEIPKEEKDPGMGAMGGMGGGMGGGMF.

Residues 1-26 (MLRLPTVFRQMRPVSRVLAPHLTRAY) constitute a mitochondrion transit peptide. Lysine 31 is subject to N6-succinyllysine. A phosphoserine mark is found at serine 67 and serine 70. ATP is bound at residue lysine 75. Lysine 75 carries the post-translational modification N6-acetyllysine. Residue lysine 82 is modified to N6-acetyllysine; alternate. Lysine 82 carries the post-translational modification N6-succinyllysine; alternate. N6-acetyllysine is present on lysine 87. A Phosphotyrosine modification is found at tyrosine 90. Residue lysine 91 is modified to N6-acetyllysine. 111 to 115 (DGTTT) provides a ligand contact to ATP. Lysine 125 bears the N6-acetyllysine; alternate mark. The residue at position 125 (lysine 125) is an N6-succinyllysine; alternate. An N6-acetyllysine modification is found at lysine 130. Lysine 133 carries the N6-acetyllysine; alternate modification. Lysine 133 carries the N6-succinyllysine; alternate modification. At lysine 133 the chain carries N6-malonyllysine; alternate. Position 156 is an N6-acetyllysine (lysine 156). N6-acetyllysine; alternate is present on residues lysine 191, lysine 202, lysine 205, lysine 218, and lysine 236. Lysine 191, lysine 202, lysine 205, lysine 218, and lysine 236 each carry N6-succinyllysine; alternate. At lysine 249 the chain carries N6-acetyllysine. N6-acetyllysine; alternate is present on lysine 250. Position 250 is an N6-succinyllysine; alternate (lysine 250). An N6-acetyllysine mark is found at lysine 269 and lysine 292. An N6-succinyllysine modification is found at lysine 301. The residue at position 314 (lysine 314) is an N6-acetyllysine. Lysine 352 carries the N6-acetyllysine; alternate modification. The residue at position 352 (lysine 352) is an N6-succinyllysine; alternate. N6-acetyllysine is present on residues lysine 359 and lysine 389. Lysine 396 bears the N6-acetyllysine; alternate mark. Lysine 396 carries the post-translational modification N6-succinyllysine; alternate. Serine 410 carries the phosphoserine modification. Glycine 440 is an ATP binding site. The residue at position 469 (lysine 469) is an N6-acetyllysine. Residue lysine 481 is modified to N6-acetyllysine; alternate. Position 481 is an N6-succinyllysine; alternate (lysine 481). Phosphoserine is present on serine 488. Position 520 (aspartate 520) interacts with ATP. A Glycyl lysine isopeptide (Lys-Gly) (interchain with G-Cter in SUMO2) cross-link involves residue lysine 551.

This sequence belongs to the chaperonin (HSP60) family. In terms of assembly, homoheptamer arranged in a ring structure. The functional units of these chaperonins consist of heptameric rings of the large subunit Hsp60, which function as a back-to-back double ring. Interacts with 2 heptameric Hsp10 rings to form the symmetrical football complex. Interacts with HRAS. Interacts with ATAD3A. Interacts with ETFBKMT and EEF1AKMT3. Interacts with MFHAS1. (Microbial infection) Interacts with hepatitis B virus/HBV protein X. As to quaternary structure, (Microbial infection) Interacts with HTLV-1 protein p40tax.

The protein resides in the mitochondrion matrix. It carries out the reaction ATP + H2O + a folded polypeptide = ADP + phosphate + an unfolded polypeptide.. Chaperonin implicated in mitochondrial protein import and macromolecular assembly. Together with Hsp10, facilitates the correct folding of imported proteins. May also prevent misfolding and promote the refolding and proper assembly of unfolded polypeptides generated under stress conditions in the mitochondrial matrix. The functional units of these chaperonins consist of heptameric rings of the large subunit Hsp60, which function as a back-to-back double ring. In a cyclic reaction, Hsp60 ring complexes bind one unfolded substrate protein per ring, followed by the binding of ATP and association with 2 heptameric rings of the co-chaperonin Hsp10. This leads to sequestration of the substrate protein in the inner cavity of Hsp60 where, for a certain period of time, it can fold undisturbed by other cell components. Synchronous hydrolysis of ATP in all Hsp60 subunits results in the dissociation of the chaperonin rings and the release of ADP and the folded substrate protein. The sequence is that of 60 kDa heat shock protein, mitochondrial (HSPD1) from Homo sapiens (Human).